The following is a 443-amino-acid chain: Putative phosphoribosyl transferase MT0597 (443 aa).

It in the N-terminal section; belongs to the purine/pyrimidine phosphoribosyltransferase family. This sequence in the C-terminal section; belongs to the dienelactone hydrolase family.

The polypeptide is Putative phosphoribosyl transferase MT0597 (Mycobacterium tuberculosis (strain CDC 1551 / Oshkosh)).